The chain runs to 298 residues: ATP phosphoribosyltransferase (298 aa).

The protein belongs to the ATP phosphoribosyltransferase family. Long subfamily. Mg(2+) is required as a cofactor.

It is found in the cytoplasm. The catalysed reaction is 1-(5-phospho-beta-D-ribosyl)-ATP + diphosphate = 5-phospho-alpha-D-ribose 1-diphosphate + ATP. The protein operates within amino-acid biosynthesis; L-histidine biosynthesis; L-histidine from 5-phospho-alpha-D-ribose 1-diphosphate: step 1/9. Feedback inhibited by histidine. Functionally, catalyzes the condensation of ATP and 5-phosphoribose 1-diphosphate to form N'-(5'-phosphoribosyl)-ATP (PR-ATP). Has a crucial role in the pathway because the rate of histidine biosynthesis seems to be controlled primarily by regulation of HisG enzymatic activity. This Vibrio vulnificus (strain CMCP6) protein is ATP phosphoribosyltransferase.